A 329-amino-acid chain; its full sequence is Protein-arginine N-acetylglucosaminyltransferase NleB (329 aa).

Residue Arg13 is glycosylated (N-beta-linked (GlcNAc) arginine; by autocatalysis). A UDP-N-acetyl-alpha-D-glucosamine-binding site is contributed by 48–50 (QWF). N-beta-linked (GlcNAc) arginine; by autocatalysis glycosylation is present at Arg53. Tyr72 provides a ligand contact to UDP-N-acetyl-alpha-D-glucosamine. A glycan (N-beta-linked (GlcNAc) arginine; by autocatalysis) is linked at Arg159. 219 to 222 (YLDA) serves as a coordination point for UDP-N-acetyl-alpha-D-glucosamine. Positions 221 to 223 (DAD) match the DXD motif motif. Asp223 serves as a coordination point for Mn(2+). Catalysis depends on Glu253, which acts as the Proton acceptor. An N-beta-linked (GlcNAc) arginine; by autocatalysis glycan is attached at Arg293. Residues Asn320 and Ser322 each contribute to the Mn(2+) site. Residues Ser322 and 327 to 329 (SSW) contribute to the UDP-N-acetyl-alpha-D-glucosamine site.

Belongs to the glycosyltransferase NleB family. The cofactor is Mn(2+). Auto-glycosylated: arginine GlcNAcylation is required for activity toward death domain-containing host target proteins.

It is found in the secreted. Its subcellular location is the host cell. It carries out the reaction L-arginyl-[protein] + UDP-N-acetyl-alpha-D-glucosamine = N(omega)-(N-acetyl-beta-D-glucosaminyl)-L-arginyl-[protein] + UDP + H(+). Its function is as follows. Protein-arginine N-acetylglucosaminyltransferase effector that disrupts TNF signaling in infected cells, including NF-kappa-B signaling, apoptosis and necroptosis. Acts by catalyzing the transfer of a single N-acetylglucosamine (GlcNAc) to a conserved arginine residue in the death domain of host proteins FADD, TNFRSF1A and RIPK1: arginine GlcNAcylation prevents homotypic/heterotypic death domain interactions and assembly of the oligomeric TNF-alpha receptor complex, thereby disrupting TNF signaling. Has preference for host FADD as substrate compared to TNFRSF1A and RIPK1. Also acts on host proteins without a death domain: catalyzes GlcNAcylation of host GAPDH protein, thereby preventing GAPDH interaction with TRAF2 and TRAF3, leading to inhibit NF-kappa-B signaling and type I interferon production, respectively. Also displays intra-bacterial activity by mediating GlcNAcylation of glutathione synthetase GshB. Catalyzes auto-GlcNAcylation, which is required for activity toward death domain-containing host target proteins. This chain is Protein-arginine N-acetylglucosaminyltransferase NleB, found in Citrobacter rodentium.